The following is a 520-amino-acid chain: Probable helicase MJECL08 (520 aa).

ATP contacts are provided by residues Arg162, 171–176, and 501–502; these read GAGKSN and KI.

It belongs to the HerA family.

It carries out the reaction Couples ATP hydrolysis with the unwinding of duplex DNA at the replication fork by translocating in the 5'-3' direction. This creates two antiparallel DNA single strands (ssDNA). The leading ssDNA polymer is the template for DNA polymerase III holoenzyme which synthesizes a continuous strand.. It catalyses the reaction ATP + H2O = ADP + phosphate + H(+). The enzyme catalyses Couples ATP hydrolysis with the unwinding of duplex DNA by translocating in the 3'-5' direction.. In terms of biological role, a probably bidirectional DNA helicase. The protein is Probable helicase MJECL08 of Methanocaldococcus jannaschii (strain ATCC 43067 / DSM 2661 / JAL-1 / JCM 10045 / NBRC 100440) (Methanococcus jannaschii).